The chain runs to 157 residues: Homeobox protein DBX2 (157 aa).

Positions 9–68 form a DNA-binding region, homeobox; it reads GILRRAVFSEDQRKALEKMFQKQKYISKTDRKKLAINLGLKESQVKIWFQNRRMKWRNSK. A disordered region spans residues 105-157; that stretch reads SQEQTSPRWKEKSPGNSERLTSTQPPPRANSSQSPLYLYPDHDTANKAVTSSD. Polar residues predominate over residues 118–139; sequence PGNSERLTSTQPPPRANSSQSP.

The protein belongs to the H2.0 homeobox family. Localized to the central nervous system during embryogenesis. It is found restricted to the rostro-caudal and dorso-ventral regions of the hindbrain. In the ventricular zone of the spinal cord, it localizes to the dorsal part of the basal plate. In the adult, it is detected in ovary.

The protein resides in the nucleus. In terms of biological role, appears to perform a very early function in establishing the identity of a subset of cells that originate in the region of the ventricular zone in the developing spinal cord and in the hindbrain. This is Homeobox protein DBX2 (DBX2) from Gallus gallus (Chicken).